Reading from the N-terminus, the 365-residue chain is Aminomethyltransferase (365 aa).

Belongs to the GcvT family. As to quaternary structure, the glycine cleavage system is composed of four proteins: P, T, L and H.

It catalyses the reaction N(6)-[(R)-S(8)-aminomethyldihydrolipoyl]-L-lysyl-[protein] + (6S)-5,6,7,8-tetrahydrofolate = N(6)-[(R)-dihydrolipoyl]-L-lysyl-[protein] + (6R)-5,10-methylene-5,6,7,8-tetrahydrofolate + NH4(+). In terms of biological role, the glycine cleavage system catalyzes the degradation of glycine. The sequence is that of Aminomethyltransferase from Geobacillus thermodenitrificans (strain NG80-2).